The primary structure comprises 229 residues: Orotidine 5'-phosphate decarboxylase (229 aa).

Substrate contacts are provided by residues D9, K31, 58–67 (DLKLFDIPNT), T121, R179, Q188, G208, and R209. Catalysis depends on K60, which acts as the Proton donor.

This sequence belongs to the OMP decarboxylase family. Type 1 subfamily. As to quaternary structure, homodimer.

The catalysed reaction is orotidine 5'-phosphate + H(+) = UMP + CO2. It participates in pyrimidine metabolism; UMP biosynthesis via de novo pathway; UMP from orotate: step 2/2. In terms of biological role, catalyzes the decarboxylation of orotidine 5'-monophosphate (OMP) to uridine 5'-monophosphate (UMP). This Lawsonia intracellularis (strain PHE/MN1-00) protein is Orotidine 5'-phosphate decarboxylase.